The chain runs to 357 residues: Protein pelota homolog (357 aa).

Belongs to the eukaryotic release factor 1 family. Pelota subfamily. In terms of assembly, monomer. The cofactor is a divalent metal cation.

Its subcellular location is the cytoplasm. Functionally, may function in recognizing stalled ribosomes, interact with stem-loop structures in stalled mRNA molecules, and effect endonucleolytic cleavage of the mRNA. May play a role in the release non-functional ribosomes and degradation of damaged mRNAs. Has endoribonuclease activity. This is Protein pelota homolog from Thermococcus onnurineus (strain NA1).